Reading from the N-terminus, the 137-residue chain is Small ribosomal subunit protein uS9c (137 aa).

The tract at residues Lys106–Arg137 is disordered. A compositionally biased stretch (basic residues) spans Lys118–Arg137.

The protein belongs to the universal ribosomal protein uS9 family.

The protein localises to the plastid. The protein resides in the chloroplast. In Pyropia yezoensis (Susabi-nori), this protein is Small ribosomal subunit protein uS9c (rps9).